The chain runs to 633 residues: ATP-dependent rRNA helicase SPB4 (633 aa).

Residues 11–39 (FSALTPALSEWIIDAVDAMGFVKTTPVQH) carry the Q motif motif. Residues 42–253 (IPMFMKNSDV…RVGLRNPVRI (212 aa)) enclose the Helicase ATP-binding domain. Residue 55–62 (AVTGSGKT) coordinates ATP. Residues 119–131 (EPDDEDTDMEDAD) show a composition bias toward acidic residues. Residues 119–140 (EPDDEDTDMEDADTPPKPTFPP) are disordered. The DEAD box signature appears at 201–204 (DEAD). Residues 292–446 (AMKKILSSLQ…EITVTDEDAK (155 aa)) enclose the Helicase C-terminal domain. Residues 530–629 (AYKDKAREKL…KQEAEDADFE (100 aa)) adopt a coiled-coil conformation. Composition is skewed to basic and acidic residues over residues 547–581 (DKEEGTKKKQHKKEDREKSAWTEQKESKATKEVRR) and 588–623 (REHERLAKMTDEERKEEDRVQAMIEQMRKKVAKQEA). Residues 547-633 (DKEEGTKKKQ…EDADFEGFSD (87 aa)) are disordered. Acidic residues predominate over residues 624-633 (EDADFEGFSD).

Belongs to the DEAD box helicase family. DDX55/SPB4 subfamily. Component of pre-60S ribosomal complexes.

The protein resides in the nucleus. It is found in the nucleolus. It catalyses the reaction ATP + H2O = ADP + phosphate + H(+). ATP-binding RNA helicase involved in the biogenesis of 60S ribosomal subunits. Binds 90S pre-ribosomal particles and dissociates from pre-60S ribosomal particles after processing of 27SB pre-rRNA. Required for the normal formation of 18S rRNA through the processing of pre-rRNAs at sites A0, A1 and A2, and the normal formation of 25S and 5.8S rRNAs through the processing of pre-rRNAs at sites C1 and C2. The protein is ATP-dependent rRNA helicase SPB4 of Phaeosphaeria nodorum (strain SN15 / ATCC MYA-4574 / FGSC 10173) (Glume blotch fungus).